Consider the following 453-residue polypeptide: Bifunctional protein GlmU (453 aa).

Positions Met1–Arg226 are pyrophosphorylase. Residues Leu8–Gly11, Lys22, Gln73, Gly78–Thr79, Tyr100–Asp102, Gly137, Glu151, Asn166, and Asn224 each bind UDP-N-acetyl-alpha-D-glucosamine. Asp102 is a binding site for Mg(2+). Residue Asn224 participates in Mg(2+) binding. Residues Ile227 to Gln247 are linker. Residues Gly248–Lys453 are N-acetyltransferase. UDP-N-acetyl-alpha-D-glucosamine contacts are provided by Arg330 and Lys348. The active-site Proton acceptor is the His360. UDP-N-acetyl-alpha-D-glucosamine contacts are provided by Tyr363 and Asn374. Residues Ala377, Asn383 to Tyr384, Ser402, Ala420, and Arg437 contribute to the acetyl-CoA site.

It in the N-terminal section; belongs to the N-acetylglucosamine-1-phosphate uridyltransferase family. The protein in the C-terminal section; belongs to the transferase hexapeptide repeat family. Homotrimer. Mg(2+) serves as cofactor.

The protein resides in the cytoplasm. The enzyme catalyses alpha-D-glucosamine 1-phosphate + acetyl-CoA = N-acetyl-alpha-D-glucosamine 1-phosphate + CoA + H(+). It catalyses the reaction N-acetyl-alpha-D-glucosamine 1-phosphate + UTP + H(+) = UDP-N-acetyl-alpha-D-glucosamine + diphosphate. It participates in nucleotide-sugar biosynthesis; UDP-N-acetyl-alpha-D-glucosamine biosynthesis; N-acetyl-alpha-D-glucosamine 1-phosphate from alpha-D-glucosamine 6-phosphate (route II): step 2/2. Its pathway is nucleotide-sugar biosynthesis; UDP-N-acetyl-alpha-D-glucosamine biosynthesis; UDP-N-acetyl-alpha-D-glucosamine from N-acetyl-alpha-D-glucosamine 1-phosphate: step 1/1. It functions in the pathway bacterial outer membrane biogenesis; LPS lipid A biosynthesis. In terms of biological role, catalyzes the last two sequential reactions in the de novo biosynthetic pathway for UDP-N-acetylglucosamine (UDP-GlcNAc). The C-terminal domain catalyzes the transfer of acetyl group from acetyl coenzyme A to glucosamine-1-phosphate (GlcN-1-P) to produce N-acetylglucosamine-1-phosphate (GlcNAc-1-P), which is converted into UDP-GlcNAc by the transfer of uridine 5-monophosphate (from uridine 5-triphosphate), a reaction catalyzed by the N-terminal domain. This chain is Bifunctional protein GlmU, found in Photobacterium profundum (strain SS9).